The sequence spans 209 residues: ATP phosphoribosyltransferase (209 aa).

This sequence belongs to the ATP phosphoribosyltransferase family. Short subfamily. In terms of assembly, heteromultimer composed of HisG and HisZ subunits.

It is found in the cytoplasm. It carries out the reaction 1-(5-phospho-beta-D-ribosyl)-ATP + diphosphate = 5-phospho-alpha-D-ribose 1-diphosphate + ATP. The protein operates within amino-acid biosynthesis; L-histidine biosynthesis; L-histidine from 5-phospho-alpha-D-ribose 1-diphosphate: step 1/9. Functionally, catalyzes the condensation of ATP and 5-phosphoribose 1-diphosphate to form N'-(5'-phosphoribosyl)-ATP (PR-ATP). Has a crucial role in the pathway because the rate of histidine biosynthesis seems to be controlled primarily by regulation of HisG enzymatic activity. This is ATP phosphoribosyltransferase from Caldicellulosiruptor bescii (strain ATCC BAA-1888 / DSM 6725 / KCTC 15123 / Z-1320) (Anaerocellum thermophilum).